Reading from the N-terminus, the 110-residue chain is UPF0339 protein PA0329 (110 aa).

2 consecutive repeat copies span residues 10-58 (AKDG…AFEV) and 61-109 (ANNG…LSDE). Residues 91–110 (EAGVQSVKRATPEAGLSDES) are disordered.

This sequence belongs to the UPF0339 family. Duplicated subfamily.

The protein is UPF0339 protein PA0329 of Pseudomonas aeruginosa (strain ATCC 15692 / DSM 22644 / CIP 104116 / JCM 14847 / LMG 12228 / 1C / PRS 101 / PAO1).